Reading from the N-terminus, the 327-residue chain is Aspartate--ammonia ligase (327 aa).

This sequence belongs to the class-II aminoacyl-tRNA synthetase family. AsnA subfamily.

It localises to the cytoplasm. The catalysed reaction is L-aspartate + NH4(+) + ATP = L-asparagine + AMP + diphosphate + H(+). It participates in amino-acid biosynthesis; L-asparagine biosynthesis; L-asparagine from L-aspartate (ammonia route): step 1/1. This chain is Aspartate--ammonia ligase, found in Bacillus cereus (strain ATCC 10987 / NRS 248).